A 36-amino-acid chain; its full sequence is GADEDCLPRGSKCLGENKQCCEKTTCMFYANRCVGI.

Cystine bridges form between Cys6–Cys21, Cys13–Cys26, and Cys20–Cys33.

It is found in the secreted. In terms of biological role, binds reversibly and blocks N-type voltage-gated calcium channels (Cav). In Isyndus obscurus (Assassin bug), this protein is Toxin Iob1.